The chain runs to 700 residues: Elongation factor G (700 aa).

A tr-type G domain is found at 8–290 (ERYRNIGISA…AVVEFMPSPV (283 aa)). GTP-binding positions include 17–24 (AHIDAGKT), 88–92 (DTPGH), and 142–145 (NKMD).

The protein belongs to the TRAFAC class translation factor GTPase superfamily. Classic translation factor GTPase family. EF-G/EF-2 subfamily.

The protein localises to the cytoplasm. In terms of biological role, catalyzes the GTP-dependent ribosomal translocation step during translation elongation. During this step, the ribosome changes from the pre-translocational (PRE) to the post-translocational (POST) state as the newly formed A-site-bound peptidyl-tRNA and P-site-bound deacylated tRNA move to the P and E sites, respectively. Catalyzes the coordinated movement of the two tRNA molecules, the mRNA and conformational changes in the ribosome. This chain is Elongation factor G, found in Albidiferax ferrireducens (strain ATCC BAA-621 / DSM 15236 / T118) (Rhodoferax ferrireducens).